Here is a 100-residue protein sequence, read N- to C-terminus: Enhancer of rudimentary homolog (100 aa).

The protein belongs to the E(R) family. As to quaternary structure, homodimer.

Its function is as follows. May have a role in the cell cycle. In Dictyostelium discoideum (Social amoeba), this protein is Enhancer of rudimentary homolog (erh).